The following is a 155-amino-acid chain: Small ribosomal subunit protein uS7cz/uS7cy (155 aa).

This sequence belongs to the universal ribosomal protein uS7 family. As to quaternary structure, part of the 30S ribosomal subunit.

It is found in the plastid. The protein resides in the chloroplast. Its function is as follows. One of the primary rRNA binding proteins, it binds directly to 16S rRNA where it nucleates assembly of the head domain of the 30S subunit. This Cucumis sativus (Cucumber) protein is Small ribosomal subunit protein uS7cz/uS7cy (rps7-A).